The chain runs to 147 residues: Large ribosomal subunit protein uL11 (147 aa).

The protein belongs to the universal ribosomal protein uL11 family. In terms of assembly, part of the ribosomal stalk of the 50S ribosomal subunit. Interacts with L10 and the large rRNA to form the base of the stalk. L10 forms an elongated spine to which L12 dimers bind in a sequential fashion forming a multimeric L10(L12)X complex. Post-translationally, one or more lysine residues are methylated.

Its function is as follows. Forms part of the ribosomal stalk which helps the ribosome interact with GTP-bound translation factors. The polypeptide is Large ribosomal subunit protein uL11 (Bacteroides fragilis (strain ATCC 25285 / DSM 2151 / CCUG 4856 / JCM 11019 / LMG 10263 / NCTC 9343 / Onslow / VPI 2553 / EN-2)).